We begin with the raw amino-acid sequence, 115 residues long: MAATLSEIRELIQSLTKTANEIKAMLERNSAGKPTGIEEAAAKIIKDIGDKIDQCECTKKIEEMLDQKQNADTQIVPTKQESSGLVKYSYPNWNVGNEELGSSGNPNAVKWPPRK.

2 coiled-coil regions span residues 1-28 (MAAT…MLER) and 33-54 (KPTG…KIDQ). Residues 96-106 (GNEELGSSGNP) are compositionally biased toward polar residues. A disordered region spans residues 96 to 115 (GNEELGSSGNPNAVKWPPRK).

The protein belongs to the caulimovirus ORF III family. In terms of assembly, homotetramer, through coiled-coil domain. Homotrimer when interacts with icosehadral capsid. Interacts with capsid protein, and with Movement protein.

Its subcellular location is the virion. It is found in the host cell junction. The protein localises to the host plasmodesma. In terms of biological role, plays a role in virus cell-to-cell and plant-to-plant transmission. Interacts with virion icosahedral capsid and movement protein, thereby facilitating virion cell-to-cell transmission through plasmodesmata opened by viral movement protein. Also interacts with aphid transmission factor, attaching the virion to aphid stylet when the animal feeds on an virus infected plant. Aphid saliva may later detach the virion, inducing release of infectious particles when the animal feeds on a new plant. In Scrophularia californica (California bee plant), this protein is Virion-associated protein.